A 1193-amino-acid chain; its full sequence is DNA-directed RNA polymerase subunit beta (1193 aa).

Positions 1173 to 1193 (QQAKEAAELEKAKEEALDKTE) are disordered. The span at 1177-1193 (EAAELEKAKEEALDKTE) shows a compositional bias: basic and acidic residues.

It belongs to the RNA polymerase beta chain family. As to quaternary structure, the RNAP catalytic core consists of 2 alpha, 1 beta, 1 beta' and 1 omega subunit. When a sigma factor is associated with the core the holoenzyme is formed, which can initiate transcription.

It catalyses the reaction RNA(n) + a ribonucleoside 5'-triphosphate = RNA(n+1) + diphosphate. Functionally, DNA-dependent RNA polymerase catalyzes the transcription of DNA into RNA using the four ribonucleoside triphosphates as substrates. This chain is DNA-directed RNA polymerase subunit beta, found in Streptococcus thermophilus (strain CNRZ 1066).